The primary structure comprises 402 residues: Serine/threonine transporter SstT (402 aa).

Transmembrane regions (helical) follow at residues 17–37 (IAIG…ITVI), 44–64 (FVGG…ANAL), 78–98 (IIVL…ISHY), 138–158 (ALSQ…GFAM), 179–199 (IVRW…FDTI), 212–232 (VLIL…NPII), 295–315 (MAGA…TLGI), and 336–356 (ASGI…LFGI).

This sequence belongs to the dicarboxylate/amino acid:cation symporter (DAACS) (TC 2.A.23) family.

It is found in the cell membrane. It catalyses the reaction L-serine(in) + Na(+)(in) = L-serine(out) + Na(+)(out). It carries out the reaction L-threonine(in) + Na(+)(in) = L-threonine(out) + Na(+)(out). In terms of biological role, involved in the import of serine and threonine into the cell, with the concomitant import of sodium (symport system). In Streptococcus thermophilus (strain CNRZ 1066), this protein is Serine/threonine transporter SstT.